The following is a 494-amino-acid chain: Transcriptional regulator calD (494 aa).

The protein resides in the nucleus. In terms of biological role, transcription co-regulator that might be involved in the regulation of the expression of the gene cluster that mediates the biosynthesis of calbistrins and related compounds such as decumbenones. Calbistrin A is a secondary metabolite with an interesting structure that was recently found to have bioactivity against leukemia cells. It consists of two polyketides linked by an ester bond: a bicyclic decalin containing polyketide and a linear 12 carbon dioic acid structure. The polypeptide is Transcriptional regulator calD (Penicillium decumbens).